Consider the following 289-residue polypeptide: Zinc finger matrin-type protein 3 (289 aa).

Positions 1 to 59 (MILLQHAGLPPPKRPSSSPPMSVAARSTGALQLPPQKPFGQEASLPLAGEEEPPKGGEQ) are disordered. Positions 9-18 (LPPPKRPSSS) are enriched in pro residues. 2 Matrin-type zinc fingers span residues 70–100 (LYCK…KLRN) and 147–177 (DYCK…RLRL). Polar residues predominate over residues 180 to 191 (AQSNSFSDSSEV). The tract at residues 180-200 (AQSNSFSDSSEVGQRRTRKEG) is disordered. The Matrin-type 3 zinc-finger motif lies at 246-276 (FYCSMCNVGAGEEVEFRQHLESKQHKSKVSE).

As to quaternary structure, interacts with dsRNA.

The protein resides in the nucleus. It localises to the nucleolus. Its function is as follows. Acts as a bona fide target gene of p53/TP53. May play a role in the TP53-dependent growth regulatory pathway. May contribute to TP53-mediated apoptosis by regulation of TP53 expression and translocation to the nucleus and nucleolus. This Bos taurus (Bovine) protein is Zinc finger matrin-type protein 3.